Reading from the N-terminus, the 147-residue chain is uncharacterized protein (147 aa).

The helical transmembrane segment at 3-23 (APMVGMVVLVVTLGAAVLALS) threads the bilayer.

The protein to M.tuberculosis Rv1312.

It is found in the membrane. This is an uncharacterized protein from Mycobacterium leprae (strain TN).